The sequence spans 491 residues: Ketol-acid reductoisomerase (NADP(+)) (491 aa).

The region spanning 15-208 is the KARI N-terminal Rossmann domain; that stretch reads AQLGKCRFMG…GGHRAGVLES (194 aa). NADP(+) is bound by residues 45 to 48, Arg-68, Arg-76, Ser-78, and 108 to 110; these read CGAQ and DKQ. His-132 is a catalytic residue. An NADP(+)-binding site is contributed by Gly-158. KARI C-terminal knotted domains follow at residues 209-344 and 345-484; these read SFVA…TAPQ and YEGK…MTDM. Mg(2+) contacts are provided by Asp-217, Glu-221, Glu-389, and Glu-393. Substrate is bound at residue Ser-414.

It belongs to the ketol-acid reductoisomerase family. Requires Mg(2+) as cofactor.

The catalysed reaction is (2R)-2,3-dihydroxy-3-methylbutanoate + NADP(+) = (2S)-2-acetolactate + NADPH + H(+). It carries out the reaction (2R,3R)-2,3-dihydroxy-3-methylpentanoate + NADP(+) = (S)-2-ethyl-2-hydroxy-3-oxobutanoate + NADPH + H(+). Its pathway is amino-acid biosynthesis; L-isoleucine biosynthesis; L-isoleucine from 2-oxobutanoate: step 2/4. It participates in amino-acid biosynthesis; L-valine biosynthesis; L-valine from pyruvate: step 2/4. Functionally, involved in the biosynthesis of branched-chain amino acids (BCAA). Catalyzes an alkyl-migration followed by a ketol-acid reduction of (S)-2-acetolactate (S2AL) to yield (R)-2,3-dihydroxy-isovalerate. In the isomerase reaction, S2AL is rearranged via a Mg-dependent methyl migration to produce 3-hydroxy-3-methyl-2-ketobutyrate (HMKB). In the reductase reaction, this 2-ketoacid undergoes a metal-dependent reduction by NADPH to yield (R)-2,3-dihydroxy-isovalerate. The protein is Ketol-acid reductoisomerase (NADP(+)) of Escherichia coli (strain UTI89 / UPEC).